Reading from the N-terminus, the 229-residue chain is Large ribosomal subunit protein uL4 (229 aa).

Residues 62 to 103 (SRRQGTHQVKNRAAVSGSGKKPWKQKGTGRARHSSRRSPIWV) form a disordered region. A compositionally biased stretch (basic residues) spans 82–97 (KPWKQKGTGRARHSSR).

It belongs to the universal ribosomal protein uL4 family. In terms of assembly, part of the 50S ribosomal subunit.

One of the primary rRNA binding proteins, this protein initially binds near the 5'-end of the 23S rRNA. It is important during the early stages of 50S assembly. It makes multiple contacts with different domains of the 23S rRNA in the assembled 50S subunit and ribosome. In terms of biological role, forms part of the polypeptide exit tunnel. In Mycoplasmopsis synoviae (strain 53) (Mycoplasma synoviae), this protein is Large ribosomal subunit protein uL4.